The primary structure comprises 242 residues: Type III pantothenate kinase (242 aa).

5 to 12 (DLGNTRLK) provides a ligand contact to ATP. Residues tyrosine 94 and 100 to 103 (GCDR) each bind substrate. Catalysis depends on aspartate 102, which acts as the Proton acceptor. An ATP-binding site is contributed by threonine 124. Threonine 175 is a substrate binding site.

The protein belongs to the type III pantothenate kinase family. Homodimer. NH4(+) is required as a cofactor. The cofactor is K(+).

The protein resides in the cytoplasm. It carries out the reaction (R)-pantothenate + ATP = (R)-4'-phosphopantothenate + ADP + H(+). Its pathway is cofactor biosynthesis; coenzyme A biosynthesis; CoA from (R)-pantothenate: step 1/5. Its function is as follows. Catalyzes the phosphorylation of pantothenate (Pan), the first step in CoA biosynthesis. The sequence is that of Type III pantothenate kinase from Psychrobacter cryohalolentis (strain ATCC BAA-1226 / DSM 17306 / VKM B-2378 / K5).